A 312-amino-acid chain; its full sequence is Olfactory receptor 6C68 (312 aa).

Residues 1–23 lie on the Extracellular side of the membrane; the sequence is MRKHTAITTFILLGLTEDPQLQV. Residues 24-44 traverse the membrane as a helical segment; the sequence is LLFMFLFITYMLSVTGKLTII. The Cytoplasmic portion of the chain corresponds to 45–55; that stretch reads ALTMLDPHLKT. The helical transmembrane segment at 56–76 threads the bilayer; that stretch reads PMYFFLQNLSFLEISFTATCV. Residues 77 to 95 lie on the Extracellular side of the membrane; that stretch reads PRFLYSISTGNKIITYNAC. Residues Cys95 and Cys177 are joined by a disulfide bond. The helical transmembrane segment at 96-116 threads the bilayer; the sequence is VIQLFFADLFGVTEFFLLATM. Topologically, residues 117 to 143 are cytoplasmic; that stretch reads SYDRYVAICKPLHYMAIMSNKVCKTMV. Residues 144-164 form a helical membrane-spanning segment; the sequence is ICCWMAALMIILPPLSLGFHL. Topologically, residues 165-197 are extracellular; that stretch reads EFCDSNVINHFGCDALPILKIPCSDTSLIEQMV. Residues 198–218 traverse the membrane as a helical segment; the sequence is VASAVLTFIITLVCVVLSYTY. Residues 219-239 lie on the Cytoplasmic side of the membrane; that stretch reads IIRTILKFPSVQQKKKAFSTC. The helical transmembrane segment at 240–260 threads the bilayer; sequence SSHITVVSITYGSCIFIYIKP. At 261-271 the chain is on the extracellular side; sequence SAKEEVNINKG. The chain crosses the membrane as a helical span at residues 272–292; the sequence is VSVLISSISPMLNSFIYTLRN. Residues 293–312 are Cytoplasmic-facing; that stretch reads EQVKQAFHDSLKKIAFRLKK.

This sequence belongs to the G-protein coupled receptor 1 family.

It is found in the cell membrane. Its function is as follows. Odorant receptor. The chain is Olfactory receptor 6C68 (OR6C68) from Homo sapiens (Human).